The following is a 475-amino-acid chain: CAAX prenyl protease 1 homolog (475 aa).

Residues 1-18 (MGMWASLDALWEMPAEKR) lie on the Lumenal side of the membrane. A helical membrane pass occupies residues 19 to 39 (IFGAVLLFSWTVYLWETFLAQ). Residues 40–81 (RQRRIYKTTTHVPPELGQIMDSETFEKSRLYQLDKSTFSFWS) lie on the Nuclear side of the membrane. The helical transmembrane segment at 82–102 (GLYSETEGTLILLFGGIPYLW) threads the bilayer. Residues 103 to 123 (RLSGRFCGYAGFGPEYEITQS) lie on the Lumenal side of the membrane. The helical transmembrane segment at 124-144 (LVFLLLATLFSALTGLPWSLY) threads the bilayer. The Nuclear segment spans residues 145–170 (NTFVIEEKHGFNQQTLGFFMKDAIKK). Residues 171–191 (FVVTQCILLPVSSLLLYIIKI) traverse the membrane as a helical segment. Topologically, residues 192-195 (GGDY) are lumenal. Residues 196–216 (FFIYAWLFTLVVSLVLVTIYA) form a helical membrane-spanning segment. The Nuclear segment spans residues 217 to 347 (DYIAPLFDKF…GHWKLGHTVK (131 aa)). Zn(2+) is bound at residue histidine 335. Residue glutamate 336 is part of the active site. Histidine 339 is a Zn(2+) binding site. A helical transmembrane segment spans residues 348–368 (NIIISQMNSFLCFFLFAVLIG). The Lumenal segment spans residues 369–382 (RKELFAAFGFYDSQ). Residues 383 to 405 (PTLIGLLIIFQFIFSPYNEVLSF) traverse the membrane as a helical segment. Residues 406-475 (CLTVLSRRFE…LQALKTMKQH (70 aa)) are Nuclear-facing. Zn(2+) is bound at residue glutamate 415.

This sequence belongs to the peptidase M48A family. Zn(2+) serves as cofactor. Widely expressed. High levels in kidney, prostate, testis and ovary.

The protein resides in the endoplasmic reticulum membrane. It is found in the nucleus inner membrane. It localises to the early endosome membrane. Its subcellular location is the late endosome membrane. It catalyses the reaction Hydrolyzes the peptide bond -P2-(S-farnesyl or geranylgeranyl)C-P1'-P2'-P3'-COOH where P1' and P2' are amino acids with aliphatic side chains and P3' is any C-terminal residue.. Its function is as follows. Transmembrane metalloprotease whose catalytic activity is critical for processing lamin A/LMNA on the inner nuclear membrane and clearing clogged translocons on the endoplasmic reticulum. Proteolytically removes the C-terminal three residues of farnesylated proteins. Also plays an antiviral role independently of its protease activity by restricting enveloped RNA and DNA viruses, including influenza A, Zika, Ebola, Sindbis, vesicular stomatitis, cowpox, and vaccinia. Mechanistically, controls IFITM antiviral pathway to hinder viruses from breaching the endosomal barrier by modulating membrane fluidity. In Homo sapiens (Human), this protein is CAAX prenyl protease 1 homolog.